We begin with the raw amino-acid sequence, 172 residues long: MGLGNPGRRYALTRHNAGHMVLDELFRRHGGRWRRARRAEAAEVSVEGREAVLLKPATFMNESGEALSGYRAEDLIVVHDDLDLPAGTVRVKVGGGAGGHNGLRSVISRVGNGFVRVRVGIGRPPEGADVTGYVLGRMDRAAREAIPRAADAVEAVLEEGPEAAMNRFNARA.

Tyr-10 is a tRNA binding site. His-15 (proton acceptor) is an active-site residue. TRNA is bound by residues Phe-59, Asn-61, and Asn-101.

The protein belongs to the PTH family. Monomer.

Its subcellular location is the cytoplasm. The catalysed reaction is an N-acyl-L-alpha-aminoacyl-tRNA + H2O = an N-acyl-L-amino acid + a tRNA + H(+). In terms of biological role, hydrolyzes ribosome-free peptidyl-tRNAs (with 1 or more amino acids incorporated), which drop off the ribosome during protein synthesis, or as a result of ribosome stalling. Its function is as follows. Catalyzes the release of premature peptidyl moieties from peptidyl-tRNA molecules trapped in stalled 50S ribosomal subunits, and thus maintains levels of free tRNAs and 50S ribosomes. This is Peptidyl-tRNA hydrolase from Rubrobacter xylanophilus (strain DSM 9941 / JCM 11954 / NBRC 16129 / PRD-1).